The chain runs to 285 residues: Taffazin (285 aa).

Residues 1-23 lie on the Mitochondrial intermembrane side of the membrane; it reads MDSNNSNNNNKNLKQICDIPKPQ. The stretch at 24–42 is an intramembrane region; it reads FLSKGVFTLVGVLCKFWIS. Residues 43–285 lie on the Mitochondrial intermembrane side of the membrane; it reads MNTVTTSGID…GRFSHPTIKD (243 aa). Residues 74 to 79 carry the HXXXXD motif motif; the sequence is HSSNLD.

The protein belongs to the taffazin family.

The protein localises to the mitochondrion outer membrane. Its subcellular location is the mitochondrion inner membrane. The catalysed reaction is a 1-acyl-sn-glycero-3-phosphate + a 1,2-diacyl-sn-glycero-3-phospho-(1'-sn-glycerol) = 1-acyl-sn-glycero-3-phospho-(1'-sn-glycerol) + a 1,2-diacyl-sn-glycero-3-phosphate. The enzyme catalyses 1-hexadecanoyl-2-(9Z,12Z-octadecadienoyl)-sn-glycero-3-phospho-(1'-sn-glycerol) + 1-(9Z-octadecenoyl)-sn-glycero-3-phosphate = 1-(9Z)-octadecenoyl-2-(9Z,12Z)-octadecadienoyl-sn-glycero-3-phosphate + 1-hexadecanoyl-sn-glycero-3-phospho-(1'-sn-glycerol). It catalyses the reaction 1'-[1,2-diacyl-sn-glycero-3-phospho],3'-[1-acyl-sn-glycero-3-phospho]-glycerol + a 1,2-diacyl-sn-glycero-3-phosphocholine = a cardiolipin + a 1-acyl-sn-glycero-3-phosphocholine. It carries out the reaction 1-hexadecanoyl-2-(9Z,12Z-octadecadienoyl)-sn-glycero-3-phosphocholine + 1-hexadecanoyl-sn-glycero-3-phosphocholine = 2-(9Z,12Z-octadecadienoyl)-sn-glycero-3-phosphocholine + 1,2-dihexadecanoyl-sn-glycero-3-phosphocholine. The catalysed reaction is 1,2-di-(9Z-octadecenoyl)-sn-glycero-3-phosphocholine + 1-hexadecanoyl-sn-glycero-3-phosphocholine = 1-hexadecanoyl-2-(9Z-octadecenoyl)-sn-glycero-3-phosphocholine + 1-(9Z-octadecenoyl)-sn-glycero-3-phosphocholine. Its pathway is phospholipid metabolism. Acyltransferase required to remodel newly synthesized phospholipid cardiolipin (1',3'-bis-[1,2-diacyl-sn-glycero-3-phospho]-glycerol or CL), a key component of the mitochondrial inner membrane, with tissue specific acyl chains necessary for adequate mitochondrial function. Its role in cellular physiology is to improve mitochondrial performance. CL is critical for the coassembly of lipids and proteins in mitochondrial membranes, for instance, remodeling of the acyl groups of CL in the mitochondrial inner membrane affects the assembly and stability of respiratory chain complex IV and its supercomplex forms. Catalyzes the transacylation between phospholipids and lysophospholipids, with the highest rate being between phosphatidylcholine (1,2-diacyl-sn-glycero-3-phosphocholine or PC) and CL. Catalyzes both 1-acyl-sn-glycero-3-phosphocholine (lysophosphatidylcholine or LPC) reacylation and PC-CL transacylation, that means, it exchanges acyl groups between CL and PC by a combination of forward and reverse transacylations. Also catalyzes transacylations between other phospholipids such as phosphatidylethanolamine (1,2-diacyl-sn-glycero-3-phosphoethanolamine or PE) and CL, between PC and PE, and between PC and phosphatidate (1,2-diacyl-sn-glycero-3-phosphate or PA), although at lower rate. Not regiospecific, it transfers acyl groups into any of the sn-1 and sn-2 positions of the monolysocardiolipin (MLCL), which is an important prerequisite for uniformity and symmetry in CL acyl distribution. Cannot transacylate dilysocardiolipin (DLCL), thus, the role of MLCL is limited to that of an acyl acceptor. CoA-independent, it can reshuffle molecular species within a single phospholipid class. Redistributes fatty acids between MLCL, CL, and other lipids, which prolongs the half-life of CL. Its action is completely reversible, which allows for cyclic changes, such as fission and fusion or bending and flattening of the membrane. Hence, by contributing to the flexibility of the lipid composition, it plays an important role in the dynamics of mitochondria membranes. The sequence is that of Taffazin (taz) from Dictyostelium discoideum (Social amoeba).